Reading from the N-terminus, the 612-residue chain is Transcription factor Sp2 (612 aa).

Serine 78 carries the post-translational modification Phosphoserine. Disordered regions lie at residues 166–195 (TTPSTSGHKPVPIKPAPVQKSSTTTTPVQS) and 226–250 (GPAQLLTESPPTPLSKTNKKARKKS). Residues 184–195 (QKSSTTTTPVQS) show a composition bias toward polar residues. The 9aaTAD; inactive motif lies at 360 to 368 (GEVQTVLVQ). 3 consecutive C2H2-type zinc fingers follow at residues 524–548 (HVCHIPDCGKTFRKTSLLRAHVRLH), 554–578 (FVCNWFFCGKRFTRSDELQRHARTH), and 584–606 (FECAQCQKRFMRSDHLTKHYKTH).

The protein belongs to the Sp1 C2H2-type zinc-finger protein family.

It is found in the nucleus. Functionally, binds to GC box promoters elements and selectively activates mRNA synthesis from genes that contain functional recognition sites. This Mus musculus (Mouse) protein is Transcription factor Sp2 (Sp2).